The chain runs to 450 residues: Endosomal transmembrane epsin interactor 1 (450 aa).

The N-terminal stretch at 1 to 29 (MILLVNLFVLLSVVCVLLNLAGFILGCQG) is a signal peptide. Topologically, residues 30 to 85 (AQFVSSVPRCDLVDLGEGKICFCCEEFQPAKCTDKENALKLFPVQPCSAVHLLLKK) are lumenal. A helical transmembrane segment spans residues 86–106 (VLFALCALNALTTTVCLVAAA). The Cytoplasmic segment spans residues 107 to 450 (LRYLQIFATR…LIGVIRETVL (344 aa)). The segment at 107–450 (LRYLQIFATR…LIGVIRETVL (344 aa)) is mediates interaction with EPN1. 2 consecutive short sequence motifs (PPxY; mediates interaction with ITCH) follow at residues 148 to 151 (PPSY) and 194 to 197 (PPPY). Positions 235–284 (DGDIPNIPAEENASTSTPSSTLVRPIRSRRALPPLRTRSKSDPVLHPSEE) are disordered. Residues 246–256 (NASTSTPSSTL) show a composition bias toward polar residues. The segment covering 273–284 (SKSDPVLHPSEE) has biased composition (basic and acidic residues). Lys274 is covalently cross-linked (Glycyl lysine isopeptide (Lys-Gly) (interchain with G-Cter in ubiquitin)). Ser275 carries the phosphoserine modification. Glycyl lysine isopeptide (Lys-Gly) (interchain with G-Cter in ubiquitin) cross-links involve residues Lys329 and Lys365.

The protein belongs to the ENTREP family. As to quaternary structure, interacts with ITCH; enhances the ubiquitination of CXCR4 by ITCH and the subsequent endocytosis and desensitization of the receptor. Interacts with EPN1. In terms of processing, monoubiquitinated at Lys-274, Lys-329 and Lys-365 by ITCH. In terms of tissue distribution, prominently expressed in muscle.

It is found in the early endosome membrane. The protein resides in the late endosome membrane. The protein localises to the recycling endosome membrane. It localises to the cell membrane. Functions as an activator of the E3 ubiquitin protein ligase ITCH in the ubiquitination of the CXCL12-activated CXCR4 receptor. Thereby, triggers CXCR4 endocytosis and desensitization, negatively regulating the CXCL12/CXCR4 signaling pathway. The polypeptide is Endosomal transmembrane epsin interactor 1 (Homo sapiens (Human)).